Consider the following 1357-residue polypeptide: RNA2 polyprotein (1357 aa).

It belongs to the nepoviruses RNA2 polyprotein family. In terms of processing, specific enzymatic cleavages in vivo by the P1 encoded 3C-like protease yield mature proteins.

It localises to the host cell junction. The protein resides in the host plasmodesma. The protein localises to the host cytoplasm. It is found in the host nucleus. Its subcellular location is the virion. Implicated in RNA2 replication. Could also be required for nematode transmission of the virus. Functionally, transports viral genome to neighboring plant cells directly through plasmosdesmata, without any budding. The movement protein allows efficient cell to cell propagation, by bypassing the host cell wall barrier. Acts by forming a tubular structure at the host plasmodesmata, enlarging it enough to allow free passage of virion capsids. The sequence is that of RNA2 polyprotein from Beet ringspot virus (BRSV).